The following is a 32-amino-acid chain: Cyclotide glopa B (32 aa).

Residues 1 to 32 constitute a cross-link (cyclopeptide (Gly-Asn)); sequence GGSVPCIETCVWTGCFLVPGCSCKSDKKCYLN. 3 disulfide bridges follow: Cys-6–Cys-21, Cys-10–Cys-23, and Cys-15–Cys-29.

Post-translationally, this is a cyclic peptide.

Probably participates in a plant defense mechanism. The sequence is that of Cyclotide glopa B from Gloeospermum pauciflorum.